The sequence spans 546 residues: Probable malate:quinone oxidoreductase (546 aa).

Belongs to the MQO family. The cofactor is FAD.

It carries out the reaction (S)-malate + a quinone = a quinol + oxaloacetate. It participates in carbohydrate metabolism; tricarboxylic acid cycle; oxaloacetate from (S)-malate (quinone route): step 1/1. This is Probable malate:quinone oxidoreductase from Acinetobacter baumannii (strain AB0057).